The primary structure comprises 177 residues: Large ribosomal subunit protein uL10 (177 aa).

It belongs to the universal ribosomal protein uL10 family. As to quaternary structure, part of the ribosomal stalk of the 50S ribosomal subunit. The N-terminus interacts with L11 and the large rRNA to form the base of the stalk. The C-terminus forms an elongated spine to which L12 dimers bind in a sequential fashion forming a multimeric L10(L12)X complex.

In terms of biological role, forms part of the ribosomal stalk, playing a central role in the interaction of the ribosome with GTP-bound translation factors. This Caldanaerobacter subterraneus subsp. tengcongensis (strain DSM 15242 / JCM 11007 / NBRC 100824 / MB4) (Thermoanaerobacter tengcongensis) protein is Large ribosomal subunit protein uL10.